We begin with the raw amino-acid sequence, 809 residues long: Ribosome biogenesis protein ERB1 (809 aa).

Positions 1 to 107 (MSKSSKVGMT…SDTRSITDAI (107 aa)) are disordered. 2 stretches are compositionally biased toward acidic residues: residues 30–70 (AEVD…EDSD) and 77–97 (LGEEEDPSDYDSENFSDEPQE). The required for interaction with NOP7 stretch occupies residues 267-383 (RFVPSKHEAK…LRKVPGYQES (117 aa)). Residues 383 to 419 (SVRERFERCLDLYLAPRVRHNKLNIDPESLIPELPSP) are required for interaction with YTM1. WD repeat units lie at residues 435–474 (GHTDKIRTISIDPQGLWLATGSDDGSVRIWEILTGRQVFN) and 483–523 (NDED…FDIE). Residues 545–569 (EEKFKNDEGNEDEDDEDDSATSTAV) form a disordered region. The span at 553 to 563 (GNEDEDDEDDS) shows a compositional bias: acidic residues. WD repeat units lie at residues 593–635 (QCRK…SQSP), 638–676 (KSKGIIMDAKFHPFKPQLFVASQRQVRIYDLAQQVLVKK), 679–718 (PGVRLLSTIDIHPRGDNLLASSYDKRVLWHDLDLSATPYK), 722–762 (YHEK…DLMT), and 778–809 (VNSIGILDLIWHPKEAWLFSAGADGTARLWTT).

It belongs to the WD repeat BOP1/ERB1 family. Component of the NOP7 complex, composed of ERB1, NOP7 and YTM1. The complex is held together by ERB1, which interacts with NOP7 via its N-terminal domain and with YTM1 via a high-affinity interaction between the seven-bladed beta-propeller domains of the 2 proteins. The NOP7 complex associates with the 66S pre-ribosome.

The protein localises to the nucleus. Its subcellular location is the nucleolus. The protein resides in the nucleoplasm. Functionally, component of the NOP7 complex, which is required for maturation of the 25S and 5.8S ribosomal RNAs and formation of the 60S ribosome. The chain is Ribosome biogenesis protein ERB1 from Scheffersomyces stipitis (strain ATCC 58785 / CBS 6054 / NBRC 10063 / NRRL Y-11545) (Yeast).